The sequence spans 509 residues: MFLLMVPLFSYLAAASLRVLSPNPASCDSPELGYQCNSETTHTWGQYSPFFSVPSEISPSVPEGCRLTFAQVLSRHGARFPTPGKAAAISAVLTKIKTSATWYAPDFEFIKDYNYVLGVDHLTAFGEQEMVNSGIKFYQRYASLIRDYTDPESLPFIRASGQERVIASAENFTTGFYSALLADKNPPPSSLPLPRQEMVIISESPTANNTMHHGLCRAFEDSTTGDAAQATFIAANFPPITARLNAQGFKGVTLSDTDVLSLMDLCPFDTVAYPPSSSLTTSSSPSGGSKLSPFCSLFTAQDFTVYDYLQSLGKFYGYGPGNSLAATQGVGYVNELLARLTVSPVVDNTTTNSTLDGNEDTFPLSRNRTVFADFSHDNDMMGILTALRIFEGVDAEKMMDNTTIPREYGETGDDPANLKEREGLFKVGWVVPFAARVYFEKMICDGDGSGEMVQSEEEQDKELVRILVNDRVVKLNGCEADELGRCKLDKFVESMEFARRGGDWDKCFA.

Residues 1-15 (MFLLMVPLFSYLAAA) form the signal peptide. A disulfide bridge links cysteine 27 with cysteine 36. Residues glutamine 46, tyrosine 47, arginine 75, histidine 76, arginine 79, threonine 82, and arginine 164 each coordinate 1D-myo-inositol hexakisphosphate. Disulfide bonds link cysteine 65-cysteine 444, cysteine 216-cysteine 507, cysteine 266-cysteine 295, and cysteine 478-cysteine 486. Catalysis depends on histidine 76, which acts as the Nucleophile. 2 N-linked (GlcNAc...) asparagine glycosylation sites follow: asparagine 171 and asparagine 208. Lysine 314 contributes to the 1D-myo-inositol hexakisphosphate binding site. N-linked (GlcNAc...) asparagine glycans are attached at residues asparagine 348, asparagine 352, and asparagine 367. Residues histidine 376 and aspartate 377 each coordinate 1D-myo-inositol hexakisphosphate. N-linked (GlcNAc...) asparagine glycosylation is present at asparagine 401.

The protein belongs to the histidine acid phosphatase family. Monomer.

The protein localises to the secreted. The catalysed reaction is 1D-myo-inositol hexakisphosphate + H2O = 1D-myo-inositol 1,2,4,5,6-pentakisphosphate + phosphate. It catalyses the reaction 1D-myo-inositol 1,2,4,5,6-pentakisphosphate + H2O = 1D-myo-inositol 1,2,5,6-tetrakisphosphate + phosphate. The enzyme catalyses 1D-myo-inositol 1,2,5,6-tetrakisphosphate + H2O = 1D-myo-inositol 1,2,6-trisphosphate + phosphate. It carries out the reaction 1D-myo-inositol 1,2,6-trisphosphate + H2O = 1D-myo-inositol 1,2-bisphosphate + phosphate. The catalysed reaction is 1D-myo-inositol 1,2-bisphosphate + H2O = 1D-myo-inositol 2-phosphate + phosphate. Functionally, catalyzes the phosphate monoester hydrolysis of phytic acid (myo-inositol hexakisphosphate), which results in the stepwise formation of myo-inositol pentakis-, tetrakis-, tris-, bis-, and monophosphates, as well as the liberation of inorganic phosphate. Myo-inositol 2-monophosphate is the end product. Is also able to dephosphorylate the classic acid phosphatase substrate p-nitrophenyl phosphate. The sequence is that of Phytase A (pht-1) from Neurospora crassa (strain ATCC 24698 / 74-OR23-1A / CBS 708.71 / DSM 1257 / FGSC 987).